The following is a 265-amino-acid chain: Early E4 31 kDa protein (265 aa).

This sequence belongs to the adenoviridae E4 30 to 34 kDa protein family. Interacts with E1B-55k.

It is found in the host nucleus. The protein localises to the host cytoplasm. In terms of biological role, plays a major role to prevent cellular inhibition of viral genome replication by nuclear bodies. Assembles an SCF-like E3 ubiquitin ligase complex based on the cellular proteins ELOB, ELOC, CUL5 and RBX1, in cooperation with viral E1B-55K. This viral RING-type ligase ubiquitinates cellular substrates prior to proteasomal degradation: p53/TP53, LIG4, MRE11-RAD50-NBS1 (MRN) complex, ITGA3, DAXX and BLM. The polypeptide is Early E4 31 kDa protein (Canis lupus familiaris (Dog)).